Reading from the N-terminus, the 455-residue chain is 1-deoxy-D-xylulose 5-phosphate reductoisomerase (455 aa).

NADPH is bound by residues threonine 30, glycine 31, serine 32, isoleucine 33, glutamine 63, and asparagine 159. 1-deoxy-D-xylulose 5-phosphate is bound at residue lysine 160. Glutamate 161 lines the NADPH pocket. Aspartate 185 contributes to the Mn(2+) binding site. The 1-deoxy-D-xylulose 5-phosphate site is built by serine 186 and glutamate 187. A Mn(2+)-binding site is contributed by glutamate 187. Polar residues predominate over residues tyrosine 205 to proline 214. The tract at residues tyrosine 205–threonine 233 is disordered. 1-deoxy-D-xylulose 5-phosphate is bound by residues serine 246 and histidine 269. Glycine 275 provides a ligand contact to NADPH. Serine 282, asparagine 287, lysine 288, and glutamate 291 together coordinate 1-deoxy-D-xylulose 5-phosphate. Residue glutamate 291 participates in Mn(2+) binding.

It belongs to the DXR family. The cofactor is Mg(2+). Mn(2+) serves as cofactor.

The enzyme catalyses 2-C-methyl-D-erythritol 4-phosphate + NADP(+) = 1-deoxy-D-xylulose 5-phosphate + NADPH + H(+). Its pathway is isoprenoid biosynthesis; isopentenyl diphosphate biosynthesis via DXP pathway; isopentenyl diphosphate from 1-deoxy-D-xylulose 5-phosphate: step 1/6. Functionally, catalyzes the NADPH-dependent rearrangement and reduction of 1-deoxy-D-xylulose-5-phosphate (DXP) to 2-C-methyl-D-erythritol 4-phosphate (MEP). The polypeptide is 1-deoxy-D-xylulose 5-phosphate reductoisomerase (Rhodopirellula baltica (strain DSM 10527 / NCIMB 13988 / SH1)).